An 803-amino-acid polypeptide reads, in one-letter code: Palmitoyl thioesterase CPT1C (803 aa).

The Cytoplasmic portion of the chain corresponds to 1-52 (MAEAHQAVGFRPSLTSDGAEVELSAPVLQEIYLSGLRSWKRHLSRFWNDFLT). A helical transmembrane segment spans residues 53 to 75 (GVFPASPLSWLFLFSAIQLAWFL). At 76–103 (QLDPSLGLMEKIKELLPDWGGQHHGLRG) the chain is on the lumenal side. Residues 104 to 126 (VLAAALFASCLWGALIFTLHVAL) form a helical membrane-spanning segment. Topologically, residues 127–803 (RLLLSYHGWL…SKASMTSTDF (677 aa)) are cytoplasmic. Catalysis depends on histidine 470, which acts as the Proton acceptor. A CoA-binding site is contributed by 552-564 (GKSFIRRCHLSSD). (R)-carnitine contacts are provided by tyrosine 586, serine 588, and threonine 599. A required for interaction with GRIA1 region spans residues 761-803 (LFQAGQHFKRRFRGSGKENSRHRCGFLSRQTGASKASMTSTDF). Residues 772-803 (FRGSGKENSRHRCGFLSRQTGASKASMTSTDF) form a disordered region. Residues 788–803 (SRQTGASKASMTSTDF) are compositionally biased toward polar residues.

This sequence belongs to the carnitine/choline acetyltransferase family. As to quaternary structure, peripherally associated with AMPAR complex. AMPAR complex consists of an inner core made of 4 pore-forming GluA/GRIA proteins (GRIA1, GRIA2, GRIA3 and GRIA4) and 4 major auxiliary subunits arranged in a twofold symmetry. One of the two pairs of distinct binding sites is occupied either by CNIH2, CNIH3 or CACNG2, CACNG3. The other harbors CACNG2, CACNG3, CACNG4, CACNG8 or GSG1L. This inner core of AMPAR complex is complemented by outer core constituents binding directly to the GluA/GRIA proteins at sites distinct from the interaction sites of the inner core constituents. Outer core constituents include at least PRRT1, PRRT2, CKAMP44/SHISA9, FRRS1L and NRN1. The proteins of the inner and outer core serve as a platform for other, more peripherally associated AMPAR constituents, including CPT1C. Alone or in combination, these auxiliary subunits control the gating and pharmacology of the AMPAR complex and profoundly impact their biogenesis and protein processing. Interacts with SACM1L; the interaction regulates SACM1L phosphatidylinositol-3-phosphatase activity and translocation to endoplasmic reticulum/trans Golgi network in a malonyl-CoA dependent manner. Interacts with ATL1. In terms of tissue distribution, expressed predominantly in brain and testis. Expressed in motor neurons.

The protein resides in the cell projection. Its subcellular location is the dendrite. It localises to the axon. It is found in the endoplasmic reticulum membrane. It carries out the reaction S-hexadecanoyl-L-cysteinyl-[protein] + H2O = L-cysteinyl-[protein] + hexadecanoate + H(+). In terms of biological role, palmitoyl thioesterase specifically expressed in the endoplasmic reticulum of neurons. Modulates the trafficking of the glutamate receptor, AMPAR, to plasma membrane through depalmitoylation of GRIA1. Also regulates AMPR trafficking through the regulation of SACM1L phosphatidylinositol-3-phosphatase activity by interaction in a malonyl-CoA dependent manner. Binds malonyl-CoA and couples malonyl-CoA to ceramide levels, necessary for proper spine maturation and contributing to systemic energy homeostasis and appetite control. Binds to palmitoyl-CoA, but does not have carnitine palmitoyltransferase 1 catalytic activity or at very low levels. In Homo sapiens (Human), this protein is Palmitoyl thioesterase CPT1C.